The primary structure comprises 131 residues: MSSLSYCLLVTGPAYGTQQASSAYQFAQALITMGHKLNTVFFYREGVYNGNQLTSPASDEFDLVSAWQMMATEHRFSMHICIAAALRRGVIDAQQASELNLPVANLAEGFELSGLGTLAEAMLICDRVVQF.

The active-site Cysteine persulfide intermediate is Cys-81.

Belongs to the DsrE/TusD family. As to quaternary structure, heterohexamer, formed by a dimer of trimers. The hexameric TusBCD complex contains 2 copies each of TusB, TusC and TusD. The TusBCD complex interacts with TusE.

The protein localises to the cytoplasm. Functionally, part of a sulfur-relay system required for 2-thiolation of 5-methylaminomethyl-2-thiouridine (mnm(5)s(2)U) at tRNA wobble positions. Accepts sulfur from TusA and transfers it in turn to TusE. In Photorhabdus laumondii subsp. laumondii (strain DSM 15139 / CIP 105565 / TT01) (Photorhabdus luminescens subsp. laumondii), this protein is Sulfurtransferase TusD.